The following is a 171-amino-acid chain: Probable deoxyuridine 5'-triphosphate nucleotidohydrolase (171 aa).

It belongs to the dCTP deaminase family. Archaeal dUTPase subfamily.

The catalysed reaction is dUTP + H2O = dUMP + diphosphate + H(+). Its pathway is pyrimidine metabolism; dUMP biosynthesis; dUMP from dCTP (dUTP route): step 2/2. Its function is as follows. This enzyme is involved in nucleotide metabolism: it produces dUMP, the immediate precursor of thymidine nucleotides and it decreases the intracellular concentration of dUTP so that uracil cannot be incorporated into DNA. The sequence is that of Probable deoxyuridine 5'-triphosphate nucleotidohydrolase from Methanosarcina barkeri (strain Fusaro / DSM 804).